Reading from the N-terminus, the 332-residue chain is RING-H2 finger protein ATL81 (332 aa).

The N-terminal stretch at 1–19 (MYDLTFLLISLFPIDITLP) is a signal peptide. Residues 76–96 (IVLTGSLLFIIFTGFFSFFFC) traverse the membrane as a helical segment. The segment at 154-196 (CSICLTEFMDDDTIRLISTCNHSFHTICIDLWFEGHKTCPVCR) adopts an RING-type; atypical zinc-finger fold.

It belongs to the RING-type zinc finger family. ATL subfamily.

The protein localises to the membrane. It catalyses the reaction S-ubiquitinyl-[E2 ubiquitin-conjugating enzyme]-L-cysteine + [acceptor protein]-L-lysine = [E2 ubiquitin-conjugating enzyme]-L-cysteine + N(6)-ubiquitinyl-[acceptor protein]-L-lysine.. It participates in protein modification; protein ubiquitination. The sequence is that of RING-H2 finger protein ATL81 (ATL81) from Arabidopsis thaliana (Mouse-ear cress).